We begin with the raw amino-acid sequence, 149 residues long: Down syndrome critical region protein 9 (149 aa).

Positions 1-41 (MGRICPVNSRARRLRARPGRPSGDSLPYHQLQGGAPRLWSP) are disordered.

As to expression, testis specific.

The sequence is that of Down syndrome critical region protein 9 (DSCR9) from Homo sapiens (Human).